Here is a 321-residue protein sequence, read N- to C-terminus: Olfactory receptor 5K3 (321 aa).

The Extracellular portion of the chain corresponds to 1–25; sequence MNKENHSLIAEFILTGFTYHPKLKT. The N-linked (GlcNAc...) asparagine glycan is linked to N5. A helical membrane pass occupies residues 26 to 46; that stretch reads VLFVVFFAIYLITMVGNIGLV. Residues 47–56 are Cytoplasmic-facing; the sequence is ALIYIEQRLH. Residues 57 to 77 traverse the membrane as a helical segment; sequence TPMYIFLGNLVLMDSCCSSAI. The Extracellular portion of the chain corresponds to 78–97; the sequence is TPKMLENFFSEDKRITLYEC. An intrachain disulfide couples C97 to C179. Residues 98–118 form a helical membrane-spanning segment; the sequence is MAQFYFLCLAETTDCFLLAAM. The Cytoplasmic portion of the chain corresponds to 119-143; that stretch reads AYDCYVAICNPLQYHTMMSKTLCIQ. Residues 144–164 form a helical membrane-spanning segment; that stretch reads MTAGAYLAGNLHPMIEVEFLL. Residues 165–196 lie on the Extracellular side of the membrane; the sequence is RLTFCGSHQINHFFCDVLPLYRLSCINPYINE. The chain crosses the membrane as a helical span at residues 197–217; the sequence is LVLFILAGSIQIFTIVLVSYF. Topologically, residues 218–235 are cytoplasmic; that stretch reads YILFTIFTMKSKEGRGKA. The helical transmembrane segment at 236–256 threads the bilayer; sequence LSTCASHFLSVSIFCDSLLFM. Over 257-269 the chain is Extracellular; it reads YARPGAVNEGDKD. The chain crosses the membrane as a helical span at residues 270–290; it reads IPVAIFYTLVIPLLNPFIYSL. The Cytoplasmic segment spans residues 291 to 321; sequence RNKEVINIMKKIMKKRKFCHILKQMSSPLAT.

Belongs to the G-protein coupled receptor 1 family.

The protein resides in the cell membrane. Its function is as follows. Odorant receptor. This Homo sapiens (Human) protein is Olfactory receptor 5K3 (OR5K3).